Consider the following 177-residue polypeptide: Large ribosomal subunit protein uL6 (177 aa).

Belongs to the universal ribosomal protein uL6 family. In terms of assembly, part of the 50S ribosomal subunit.

In terms of biological role, this protein binds to the 23S rRNA, and is important in its secondary structure. It is located near the subunit interface in the base of the L7/L12 stalk, and near the tRNA binding site of the peptidyltransferase center. In Yersinia pseudotuberculosis serotype O:1b (strain IP 31758), this protein is Large ribosomal subunit protein uL6.